Reading from the N-terminus, the 132-residue chain is Transcription antitermination protein NusB (132 aa).

This sequence belongs to the NusB family.

Its function is as follows. Involved in transcription antitermination. Required for transcription of ribosomal RNA (rRNA) genes. Binds specifically to the boxA antiterminator sequence of the ribosomal RNA (rrn) operons. This is Transcription antitermination protein NusB from Campylobacter lari (strain RM2100 / D67 / ATCC BAA-1060).